A 275-amino-acid polypeptide reads, in one-letter code: Subtilisin (275 aa).

Q2 serves as a coordination point for Ca(2+). Residues 5 to 274 (PYGISQIKAP…KGLINVQAAA (270 aa)) enclose the Peptidase S8 domain. D32 acts as the Charge relay system in catalysis. Ca(2+) is bound at residue D41. Catalysis depends on H64, which acts as the Charge relay system. L75, N77, I79, V81, A169, Y171, and T174 together coordinate Ca(2+). The active-site Charge relay system is the S221.

Belongs to the peptidase S8 family. The cofactor is Ca(2+).

The protein resides in the secreted. It carries out the reaction Hydrolysis of proteins with broad specificity for peptide bonds, and a preference for a large uncharged residue in P1. Hydrolyzes peptide amides.. Subtilisin is an extracellular alkaline serine protease, it catalyzes the hydrolysis of proteins and peptide amides. This chain is Subtilisin (apr), found in Bacillus pumilus (Bacillus mesentericus).